A 361-amino-acid polypeptide reads, in one-letter code: Deoxyribonuclease-2-beta (361 aa).

The N-terminal stretch at 1-27 is a signal peptide; that stretch reads MKQKMMARLLRTSFALLFLGLFGVLGA. 4 N-linked (GlcNAc...) asparagine glycosylation sites follow: N81, N103, N119, and N278.

It belongs to the DNase II family. Highly expressed in the eye lens and in salivary gland. Detected at lower levels in lung, prostate and lymph node. Isoform 2 is lung specific.

It localises to the lysosome. It carries out the reaction Endonucleolytic cleavage to nucleoside 3'-phosphates and 3'-phosphooligonucleotide end-products.. Its function is as follows. Hydrolyzes DNA under acidic conditions. Does not require divalent cations for activity. Participates in the degradation of nuclear DNA during lens cell differentiation. This chain is Deoxyribonuclease-2-beta (DNASE2B), found in Homo sapiens (Human).